The primary structure comprises 154 residues: Large ribosomal subunit protein uL22c (154 aa).

It belongs to the universal ribosomal protein uL22 family. Part of the 50S ribosomal subunit.

The protein resides in the plastid. It is found in the chloroplast. Functionally, this protein binds specifically to 23S rRNA. In terms of biological role, the globular domain of the protein is located near the polypeptide exit tunnel on the outside of the subunit, while an extended beta-hairpin is found that lines the wall of the exit tunnel in the center of the 70S ribosome. The chain is Large ribosomal subunit protein uL22c (rpl22) from Platanus occidentalis (Sycamore).